The following is a 332-amino-acid chain: DnAJ-like protein slr0093 (332 aa).

A J domain is found at 6-75; that stretch reads FKDYYQILGV…RQKYDQFGRY (70 aa).

In Synechocystis sp. (strain ATCC 27184 / PCC 6803 / Kazusa), this protein is DnAJ-like protein slr0093.